The following is a 194-amino-acid chain: Putative 3-methyladenine DNA glycosylase (194 aa).

It belongs to the DNA glycosylase MPG family.

In Anaeromyxobacter sp. (strain Fw109-5), this protein is Putative 3-methyladenine DNA glycosylase.